A 769-amino-acid polypeptide reads, in one-letter code: Elongation factor G, mitochondrial (769 aa).

Residues 1–42 constitute a mitochondrion transit peptide; sequence MSKFLRGISSISSASLKARASNFGVFHGVCSARNLHQSRLCL. Residues 74–356 form the tr-type G domain; it reads TRLRNIGVSA…AVVDYLPQPN (283 aa). GTP contacts are provided by residues 83–90, 154–158, and 208–211; these read AHIDSGKT, DTPGH, and NKMD.

The protein belongs to the TRAFAC class translation factor GTPase superfamily. Classic translation factor GTPase family. EF-G/EF-2 subfamily.

The protein resides in the mitochondrion. It functions in the pathway protein biosynthesis; polypeptide chain elongation. Its function is as follows. Mitochondrial GTPase that catalyzes the GTP-dependent ribosomal translocation step during translation elongation. During this step, the ribosome changes from the pre-translocational (PRE) to the post-translocational (POST) state as the newly formed A-site-bound peptidyl-tRNA and P-site-bound deacylated tRNA move to the P and E sites, respectively. Catalyzes the coordinated movement of the two tRNA molecules, the mRNA and conformational changes in the ribosome. The sequence is that of Elongation factor G, mitochondrial from Debaryomyces hansenii (strain ATCC 36239 / CBS 767 / BCRC 21394 / JCM 1990 / NBRC 0083 / IGC 2968) (Yeast).